Consider the following 623-residue polypeptide: Serine/threonine-protein kinase nrc-2 (623 aa).

Positions 1–215 (MPSTKNANGE…GLGALPPPIR (215 aa)) are disordered. Basic and acidic residues-rich tracts occupy residues 27-36 (SKDHKDRDAH) and 170-180 (LSKEPLEESKD). The segment covering 199–209 (LAAPDADGLGA) has biased composition (low complexity). The Protein kinase domain occupies 242 to 532 (FDKIKLIGKG…ASDIKTHPFF (291 aa)). Residues 248–256 (IGKGDVGKV) and lysine 271 contribute to the ATP site. Aspartate 367 functions as the Proton acceptor in the catalytic mechanism. Positions 569–596 (VDISGSRQMGLKGEPLESGMVTPGENAV) are disordered.

Belongs to the protein kinase superfamily. Ser/Thr protein kinase family. KIN82 subfamily.

It catalyses the reaction L-seryl-[protein] + ATP = O-phospho-L-seryl-[protein] + ADP + H(+). The enzyme catalyses L-threonyl-[protein] + ATP = O-phospho-L-threonyl-[protein] + ADP + H(+). Its function is as follows. Controls entry of the cell into the asexual developmental program. Required to repress entry into the conidiation program. In Neurospora crassa (strain ATCC 24698 / 74-OR23-1A / CBS 708.71 / DSM 1257 / FGSC 987), this protein is Serine/threonine-protein kinase nrc-2 (nrc-2).